Consider the following 470-residue polypeptide: FRIGIDA-like protein 1 (470 aa).

Residues 336–369 adopt a coiled-coil conformation; the sequence is KDQNLESEFTQEKVEERVEELEKNKALRKRNTTN. The disordered stretch occupies residues 355–400; the sequence is ELEKNKALRKRNTTNPPKQEPQQKGKKRTRDCKNGSQVPVPSQQLL. Polar residues predominate over residues 388-400; it reads NGSQVPVPSQQLL.

The protein belongs to the Frigida family. As to quaternary structure, component of the transcription activator complex FRI-C composed of FRI, FRL1, SUF4, FLX and FES1. Interacts with FRI and SUF4. As to expression, expressed during seed development and in dry seed. Preferentially expressed in the chalazal endosperm during early stages of seed development.

Required for FRI-mediated up-regulation of FLC transcripts, but not redundant with FRI and only partially redundant with FRL2. Required for the stabilization of the FRI-C complex. In Arabidopsis thaliana (Mouse-ear cress), this protein is FRIGIDA-like protein 1 (FRL1).